The primary structure comprises 194 residues: Probable GTP-binding protein EngB (194 aa).

One can recognise an EngB-type G domain in the interval 22-194 (LFLEVAFAGR…WQELDTMLNP (173 aa)). GTP is bound by residues 30–37 (GRSNVGKS), 57–61 (GCTQL), 75–78 (DLPG), 142–145 (TKAD), and 173–175 (FSS). Residues serine 37 and threonine 59 each contribute to the Mg(2+) site.

This sequence belongs to the TRAFAC class TrmE-Era-EngA-EngB-Septin-like GTPase superfamily. EngB GTPase family. Requires Mg(2+) as cofactor.

In terms of biological role, necessary for normal cell division and for the maintenance of normal septation. The chain is Probable GTP-binding protein EngB from Desulforapulum autotrophicum (strain ATCC 43914 / DSM 3382 / VKM B-1955 / HRM2) (Desulfobacterium autotrophicum).